A 244-amino-acid chain; its full sequence is Proteasome subunit alpha 2 (244 aa).

It belongs to the peptidase T1A family. The 20S proteasome core is composed of 14 alpha and 14 beta subunits that assemble into four stacked heptameric rings, resulting in a barrel-shaped structure. The two inner rings, each composed of seven catalytic beta subunits, are sandwiched by two outer rings, each composed of seven alpha subunits. The catalytic chamber with the active sites is on the inside of the barrel. Has a gated structure, the ends of the cylinder being occluded by the N-termini of the alpha-subunits. Is capped at one or both ends by the proteasome regulatory ATPase, PAN.

The protein localises to the cytoplasm. Its activity is regulated as follows. The formation of the proteasomal ATPase PAN-20S proteasome complex, via the docking of the C-termini of PAN into the intersubunit pockets in the alpha-rings, triggers opening of the gate for substrate entry. Interconversion between the open-gate and close-gate conformations leads to a dynamic regulation of the 20S proteasome proteolysis activity. In terms of biological role, component of the proteasome core, a large protease complex with broad specificity involved in protein degradation. The sequence is that of Proteasome subunit alpha 2 from Haloarcula marismortui (strain ATCC 43049 / DSM 3752 / JCM 8966 / VKM B-1809) (Halobacterium marismortui).